A 425-amino-acid chain; its full sequence is Enolase (425 aa).

(2R)-2-phosphoglycerate is bound at residue Gln162. The Proton donor role is filled by Glu204. Mg(2+) contacts are provided by Asp241, Glu282, and Asp309. The (2R)-2-phosphoglycerate site is built by Lys334, Arg363, Ser364, and Lys385. Lys334 acts as the Proton acceptor in catalysis.

This sequence belongs to the enolase family. Mg(2+) is required as a cofactor.

It is found in the cytoplasm. Its subcellular location is the secreted. It localises to the cell surface. The catalysed reaction is (2R)-2-phosphoglycerate = phosphoenolpyruvate + H2O. Its pathway is carbohydrate degradation; glycolysis; pyruvate from D-glyceraldehyde 3-phosphate: step 4/5. Its function is as follows. Catalyzes the reversible conversion of 2-phosphoglycerate (2-PG) into phosphoenolpyruvate (PEP). It is essential for the degradation of carbohydrates via glycolysis. This chain is Enolase, found in Corynebacterium aurimucosum (strain ATCC 700975 / DSM 44827 / CIP 107346 / CN-1) (Corynebacterium nigricans).